The following is a 319-amino-acid chain: Acetyl-coenzyme A carboxylase carboxyl transferase subunit alpha (319 aa).

Positions 39-293 (RLQKKSNDLT…KAVLEKQLHE (255 aa)) constitute a CoA carboxyltransferase C-terminal domain.

The protein belongs to the AccA family. As to quaternary structure, acetyl-CoA carboxylase is a heterohexamer composed of biotin carboxyl carrier protein (AccB), biotin carboxylase (AccC) and two subunits each of ACCase subunit alpha (AccA) and ACCase subunit beta (AccD).

It localises to the cytoplasm. The catalysed reaction is N(6)-carboxybiotinyl-L-lysyl-[protein] + acetyl-CoA = N(6)-biotinyl-L-lysyl-[protein] + malonyl-CoA. Its pathway is lipid metabolism; malonyl-CoA biosynthesis; malonyl-CoA from acetyl-CoA: step 1/1. In terms of biological role, component of the acetyl coenzyme A carboxylase (ACC) complex. First, biotin carboxylase catalyzes the carboxylation of biotin on its carrier protein (BCCP) and then the CO(2) group is transferred by the carboxyltransferase to acetyl-CoA to form malonyl-CoA. This is Acetyl-coenzyme A carboxylase carboxyl transferase subunit alpha from Neisseria meningitidis serogroup A / serotype 4A (strain DSM 15465 / Z2491).